A 211-amino-acid polypeptide reads, in one-letter code: Small ribosomal subunit protein uS3 (211 aa).

Residues 38–106 (LRNFLKKRLY…EIYLNIQEVR (69 aa)) enclose the KH type-2 domain.

It belongs to the universal ribosomal protein uS3 family. Part of the 30S ribosomal subunit. Forms a tight complex with proteins S10 and S14.

Its function is as follows. Binds the lower part of the 30S subunit head. Binds mRNA in the 70S ribosome, positioning it for translation. In Geobacter sulfurreducens (strain ATCC 51573 / DSM 12127 / PCA), this protein is Small ribosomal subunit protein uS3.